Here is a 620-residue protein sequence, read N- to C-terminus: Glutathione-regulated potassium-efflux system protein KefC (620 aa).

12 helical membrane passes run H4–V24, L26–L46, S54–L74, G90–L110, V114–M134, F149–L169, L178–L198, V218–G238, G270–V290, L294–V314, W327–Q347, and A359–T379. The region spanning Q399–T518 is the RCK N-terminal domain. Residues Q599 to I620 form a disordered region.

This sequence belongs to the monovalent cation:proton antiporter 2 (CPA2) transporter (TC 2.A.37) family. KefC subfamily. In terms of assembly, homodimer. Interacts with the regulatory subunit KefF.

The protein localises to the cell inner membrane. In terms of biological role, pore-forming subunit of a potassium efflux system that confers protection against electrophiles. Catalyzes K(+)/H(+) antiport. This chain is Glutathione-regulated potassium-efflux system protein KefC, found in Salmonella choleraesuis (strain SC-B67).